The following is a 211-amino-acid chain: Major fimbrial subunit (211 aa).

An N-terminal signal peptide occupies residues 1–20; that stretch reads MKKTLLGSLILLAFAGNVQA. Cysteine 43 and cysteine 83 form a disulfide bridge.

The protein belongs to the fimbrial protein family.

Its subcellular location is the fimbrium. Functionally, mediates adherence to oropharyngeal epithelial cells. Helps the airway colonization process. The chain is Major fimbrial subunit (hifA) from Haemophilus influenzae.